The following is a 28-amino-acid chain: Kalata-B12 (28 aa).

Positions Gly-1–Asp-28 form a cross-link, cyclopeptide (Gly-Asp). Disulfide bonds link Cys-4/Cys-18, Cys-8/Cys-20, and Cys-13/Cys-25.

Post-translationally, this is a cyclic peptide.

In terms of biological role, probably participates in a plant defense mechanism. This is Kalata-B12 from Oldenlandia affinis.